Here is a 515-residue protein sequence, read N- to C-terminus: ATP synthase subunit alpha (515 aa).

169–176 (GDRQTGKT) is an ATP binding site.

It belongs to the ATPase alpha/beta chains family. As to quaternary structure, F-type ATPases have 2 components, CF(1) - the catalytic core - and CF(0) - the membrane proton channel. CF(1) has five subunits: alpha(3), beta(3), gamma(1), delta(1), epsilon(1). CF(0) has three main subunits: a(1), b(2) and c(9-12). The alpha and beta chains form an alternating ring which encloses part of the gamma chain. CF(1) is attached to CF(0) by a central stalk formed by the gamma and epsilon chains, while a peripheral stalk is formed by the delta and b chains.

The protein resides in the cell inner membrane. The enzyme catalyses ATP + H2O + 4 H(+)(in) = ADP + phosphate + 5 H(+)(out). In terms of biological role, produces ATP from ADP in the presence of a proton gradient across the membrane. The alpha chain is a regulatory subunit. The sequence is that of ATP synthase subunit alpha from Neisseria meningitidis serogroup C / serotype 2a (strain ATCC 700532 / DSM 15464 / FAM18).